We begin with the raw amino-acid sequence, 506 residues long: Ribose import ATP-binding protein RbsA (506 aa).

ABC transporter domains are found at residues 5-237 (VQLI…VGRP) and 249-492 (PFGA…LAIE). 37–44 (GENGAGKS) lines the ATP pocket.

The protein belongs to the ABC transporter superfamily. Ribose importer (TC 3.A.1.2.1) family. The complex is composed of an ATP-binding protein (RbsA), two transmembrane proteins (RbsC) and a solute-binding protein (RbsB).

It is found in the cell inner membrane. The enzyme catalyses D-ribose(out) + ATP + H2O = D-ribose(in) + ADP + phosphate + H(+). Its function is as follows. Part of the ABC transporter complex RbsABC involved in ribose import. Responsible for energy coupling to the transport system. The polypeptide is Ribose import ATP-binding protein RbsA (Chelativorans sp. (strain BNC1)).